Reading from the N-terminus, the 869-residue chain is Translation initiation factor IF-2 (869 aa).

Disordered stretches follow at residues 51–78 (KQHG…NMGK) and 105–277 (EEET…SDLK). A compositionally biased stretch (polar residues) spans 67-76 (QRKTTSTLNM). Residues 110-119 (RALAEQQAQL) show a composition bias toward low complexity. Positions 120–241 (EAEKAAAEEA…KKQEAEEVHV (122 aa)) are enriched in basic and acidic residues. In terms of domain architecture, tr-type G spans 369–542 (SRAPVVTIMG…ELLDLKAPPT (174 aa)). The segment at 378–385 (GHVDHGKT) is G1. 378 to 385 (GHVDHGKT) provides a ligand contact to GTP. A G2 region spans residues 403–407 (GITQH). The interval 424-427 (DTPG) is G3. GTP-binding positions include 424–428 (DTPGH) and 478–481 (NKMD). A G4 region spans residues 478–481 (NKMD). The interval 514-516 (SAK) is G5.

This sequence belongs to the TRAFAC class translation factor GTPase superfamily. Classic translation factor GTPase family. IF-2 subfamily.

Its subcellular location is the cytoplasm. Functionally, one of the essential components for the initiation of protein synthesis. Protects formylmethionyl-tRNA from spontaneous hydrolysis and promotes its binding to the 30S ribosomal subunits. Also involved in the hydrolysis of GTP during the formation of the 70S ribosomal complex. This is Translation initiation factor IF-2 from Pseudoalteromonas atlantica (strain T6c / ATCC BAA-1087).